The primary structure comprises 337 residues: Adenylosuccinate synthetase (337 aa).

Residues 12 to 18 (GDEGKGK) and 42 to 44 (GHT) each bind GTP. The active-site Proton acceptor is Asp13. The Mg(2+) site is built by Asp13 and Gly42. Residues 13–16 (DEGK), 40–43 (NAGH), Thr124, Arg138, Gln176, Thr191, and Arg253 each bind IMP. Residue His43 is the Proton donor of the active site. 249–255 (TVTGRRR) is a binding site for substrate. GTP-binding positions include Arg255, 281 to 283 (GVD), and 321 to 323 (STG).

This sequence belongs to the adenylosuccinate synthetase family. In terms of assembly, homodimer. The cofactor is Mg(2+).

Its subcellular location is the cytoplasm. It catalyses the reaction IMP + L-aspartate + GTP = N(6)-(1,2-dicarboxyethyl)-AMP + GDP + phosphate + 2 H(+). It functions in the pathway purine metabolism; AMP biosynthesis via de novo pathway; AMP from IMP: step 1/2. Plays an important role in the de novo pathway of purine nucleotide biosynthesis. Catalyzes the first committed step in the biosynthesis of AMP from IMP. The chain is Adenylosuccinate synthetase from Archaeoglobus fulgidus (strain ATCC 49558 / DSM 4304 / JCM 9628 / NBRC 100126 / VC-16).